We begin with the raw amino-acid sequence, 156 residues long: Cyanate hydratase (156 aa).

Active-site residues include Arg-96, Glu-99, and Ser-122.

The protein belongs to the cyanase family.

The catalysed reaction is cyanate + hydrogencarbonate + 3 H(+) = NH4(+) + 2 CO2. Its function is as follows. Catalyzes the reaction of cyanate with bicarbonate to produce ammonia and carbon dioxide. This Escherichia coli (strain ATCC 8739 / DSM 1576 / NBRC 3972 / NCIMB 8545 / WDCM 00012 / Crooks) protein is Cyanate hydratase.